Here is a 215-residue protein sequence, read N- to C-terminus: Protein Syd (215 aa).

The protein belongs to the Syd family.

Its subcellular location is the cell inner membrane. In terms of biological role, interacts with the SecY protein in vivo. May bind preferentially to an uncomplexed state of SecY, thus functioning either as a chelating agent for excess SecY in the cell or as a regulatory factor that negatively controls the translocase function. This is Protein Syd from Shewanella piezotolerans (strain WP3 / JCM 13877).